A 430-amino-acid polypeptide reads, in one-letter code: Enolase (430 aa).

Gln-168 is a binding site for (2R)-2-phosphoglycerate. The active-site Proton donor is the Glu-210. Positions 247, 288, and 315 each coordinate Mg(2+). Lys-340, Arg-369, Ser-370, and Lys-391 together coordinate (2R)-2-phosphoglycerate. The Proton acceptor role is filled by Lys-340.

This sequence belongs to the enolase family. It depends on Mg(2+) as a cofactor.

Its subcellular location is the cytoplasm. It localises to the secreted. The protein resides in the cell surface. The enzyme catalyses (2R)-2-phosphoglycerate = phosphoenolpyruvate + H2O. It participates in carbohydrate degradation; glycolysis; pyruvate from D-glyceraldehyde 3-phosphate: step 4/5. In terms of biological role, catalyzes the reversible conversion of 2-phosphoglycerate (2-PG) into phosphoenolpyruvate (PEP). It is essential for the degradation of carbohydrates via glycolysis. The polypeptide is Enolase (Picosynechococcus sp. (strain ATCC 27264 / PCC 7002 / PR-6) (Agmenellum quadruplicatum)).